Here is a 143-residue protein sequence, read N- to C-terminus: Transcriptional regulator MraZ (143 aa).

SpoVT-AbrB domains follow at residues 5-47 and 76-119; these read THSP…SQKE and ASDE…DADA.

It belongs to the MraZ family. Forms oligomers.

The protein resides in the cytoplasm. Its subcellular location is the nucleoid. The sequence is that of Transcriptional regulator MraZ from Paenarthrobacter aurescens (strain TC1).